The chain runs to 226 residues: Cytidylate kinase (226 aa).

10 to 18 provides a ligand contact to ATP; the sequence is GPAGAGKST.

The protein belongs to the cytidylate kinase family. Type 1 subfamily.

The protein resides in the cytoplasm. The catalysed reaction is CMP + ATP = CDP + ADP. It carries out the reaction dCMP + ATP = dCDP + ADP. This chain is Cytidylate kinase, found in Caldicellulosiruptor saccharolyticus (strain ATCC 43494 / DSM 8903 / Tp8T 6331).